Reading from the N-terminus, the 875-residue chain is DNA mismatch repair protein MutS (875 aa).

Residue 626–633 (GPNMAGKS) participates in ATP binding. The interval 830-855 (RAAPPPPAPAAPKTSPVEERLREIQP) is disordered. Residues 845–855 (PVEERLREIQP) show a composition bias toward basic and acidic residues.

This sequence belongs to the DNA mismatch repair MutS family.

In terms of biological role, this protein is involved in the repair of mismatches in DNA. It is possible that it carries out the mismatch recognition step. This protein has a weak ATPase activity. The polypeptide is DNA mismatch repair protein MutS (Cereibacter sphaeroides (strain ATCC 17023 / DSM 158 / JCM 6121 / CCUG 31486 / LMG 2827 / NBRC 12203 / NCIMB 8253 / ATH 2.4.1.) (Rhodobacter sphaeroides)).